We begin with the raw amino-acid sequence, 411 residues long: Serine/threonine-protein kinase 54 (411 aa).

Phosphoserine; by PHOT1 occurs at positions 43 and 45. Residues 108–385 (LIIKSVIARG…EEVVAMLEAI (278 aa)) form the Protein kinase domain. Residues 114–122 (IARGTFGTV) and K135 contribute to the ATP site. D253 serves as the catalytic Proton acceptor. Phosphothreonine is present on T286.

The protein belongs to the protein kinase superfamily. Ser/Thr protein kinase family. In terms of assembly, binds to CBC2. Associates with PHOT2, BLUS1 and PM H(+)-ATPase (e.g. AHA1). Post-translationally, autophosphorylated. Phosphorylated in guard cells by HT1 in response to low CO(2) concentrations and by PHOT1 after blue light (BL) exposure. Expressed in guard cells.

Its subcellular location is the cytoplasm. It is found in the cytosol. The catalysed reaction is L-seryl-[protein] + ATP = O-phospho-L-seryl-[protein] + ADP + H(+). It carries out the reaction L-threonyl-[protein] + ATP = O-phospho-L-threonyl-[protein] + ADP + H(+). Serine/threonine protein kinase that phosphorylates proteins on serine and threonine residues. Collectively with CBC2, acts as a negative regulator of stomatal opening, probably via the inhibition of plasma membrane-type ATPases (AHA1 and AHA2) activity in guard cells, but in an abscisic acid (ABA)-independent manner. However, at low concentrations of CO(2), together with CBC2, stimulates stomatal opening via the inhibition of S-type anion channels in response to blue light (BL) and red light (RL), thus being a key component to maximize photosynthesis in the light under low CO(2) conditions. Required for temperature decrease in leaves. Downstream target of HIGH LEAF TEMPERATURE1 (HT1) during low CO(2)-induced stomatal opening. Also functions in the signaling pathways of phototropins. This Arabidopsis thaliana (Mouse-ear cress) protein is Serine/threonine-protein kinase 54.